An 891-amino-acid polypeptide reads, in one-letter code: von Willebrand factor A domain-containing protein 7 (891 aa).

Positions 1 to 28 are cleaved as a signal peptide; that stretch reads MLPVEVPLSHLGPPILLLLQLLLPPTSA. An N-linked (GlcNAc...) asparagine glycan is attached at asparagine 55. The interval 238-273 is disordered; the sequence is PKPPGKCSHGGHFDQSSSQPPRGGINKDSTSPSFSP. The 186-residue stretch at 314-499 folds into the VWFA domain; it reads ASSLSFVLDT…DVAAIVGESM (186 aa).

Expressed at low level in many tissues.

It is found in the secreted. This Mus musculus (Mouse) protein is von Willebrand factor A domain-containing protein 7 (Vwa7).